The chain runs to 165 residues: Bark lectin isoform 2 (165 aa).

2 N-linked (GlcNAc...) asparagine glycosylation sites follow: Asn-27 and Asn-57. Intrachain disulfides connect Cys-33-Cys-80 and Cys-126-Cys-133.

Belongs to the protease inhibitor I3 (leguminous Kunitz-type inhibitor) family. In terms of assembly, dimer.

In terms of biological role, glucose and N-acetylglucosamine binding lectin. Has hemagglutinating activity against human and rabbit erythrocytes which does not require divalent cations. Inhibits factor Xa and, to a lesser extent, trypsin. Does not inhibit neutrophil elastase, human plasma kallikrein, papain, human plasmin, porcine pancreatic kallikrein and bovin chymotrypsin. Has insecticidal activity against the termite species N.corniger. Induces apoptosis in prostrate cancer cell lines DU145 and PC3. The polypeptide is Bark lectin isoform 2 (Crateva tapia (Garlic-pear tree)).